Reading from the N-terminus, the 540-residue chain is 2-succinyl-5-enolpyruvyl-6-hydroxy-3-cyclohexene-1-carboxylate synthase (540 aa).

Belongs to the TPP enzyme family. MenD subfamily. Homodimer. It depends on Mg(2+) as a cofactor. Mn(2+) serves as cofactor. Requires thiamine diphosphate as cofactor.

It catalyses the reaction isochorismate + 2-oxoglutarate + H(+) = 5-enolpyruvoyl-6-hydroxy-2-succinyl-cyclohex-3-ene-1-carboxylate + CO2. It participates in quinol/quinone metabolism; 1,4-dihydroxy-2-naphthoate biosynthesis; 1,4-dihydroxy-2-naphthoate from chorismate: step 2/7. Its pathway is quinol/quinone metabolism; menaquinone biosynthesis. Functionally, catalyzes the thiamine diphosphate-dependent decarboxylation of 2-oxoglutarate and the subsequent addition of the resulting succinic semialdehyde-thiamine pyrophosphate anion to isochorismate to yield 2-succinyl-5-enolpyruvyl-6-hydroxy-3-cyclohexene-1-carboxylate (SEPHCHC). This chain is 2-succinyl-5-enolpyruvyl-6-hydroxy-3-cyclohexene-1-carboxylate synthase, found in Mycobacteroides abscessus (strain ATCC 19977 / DSM 44196 / CCUG 20993 / CIP 104536 / JCM 13569 / NCTC 13031 / TMC 1543 / L948) (Mycobacterium abscessus).